We begin with the raw amino-acid sequence, 514 residues long: Major capsid protein L1 (514 aa).

The interval 127-147 (VKDTENSNSYTTTSTDDRQNT) is disordered.

This sequence belongs to the papillomaviridae L1 protein family. Self-assembles into homopentamers. The capsid has an icosahedral symmetry and consists of 72 capsomers, with each capsomer being a pentamer of L1. Interacts with the minor capsid protein L2; this interaction is necessary for viral genome encapsidation. Interacts with protein E2; this interaction enhances E2-dependent replication and transcription activation.

It localises to the virion. The protein localises to the host nucleus. Functionally, forms an icosahedral capsid with a T=7 symmetry and a 50 nm diameter. The capsid is composed of 72 pentamers linked to each other by disulfide bonds and associated with L2 proteins. Binds to heparan sulfate proteoglycans on cell surface of basal layer keratinocytes to provide initial virion attachment. This binding mediates a conformational change in the virus capsid that facilitates efficient infection. The virion enters the host cell via endocytosis. During virus trafficking, L1 protein dissociates from the viral DNA and the genomic DNA is released to the host nucleus. The virion assembly takes place within the cell nucleus. Encapsulates the genomic DNA together with protein L2. In Human papillomavirus type 8, this protein is Major capsid protein L1.